The chain runs to 485 residues: Glutamyl-tRNA(Gln) amidotransferase subunit A (485 aa).

Active-site charge relay system residues include Lys78 and Ser153. Catalysis depends on Ser177, which acts as the Acyl-ester intermediate.

This sequence belongs to the amidase family. GatA subfamily. In terms of assembly, heterotrimer of A, B and C subunits.

It catalyses the reaction L-glutamyl-tRNA(Gln) + L-glutamine + ATP + H2O = L-glutaminyl-tRNA(Gln) + L-glutamate + ADP + phosphate + H(+). In terms of biological role, allows the formation of correctly charged Gln-tRNA(Gln) through the transamidation of misacylated Glu-tRNA(Gln) in organisms which lack glutaminyl-tRNA synthetase. The reaction takes place in the presence of glutamine and ATP through an activated gamma-phospho-Glu-tRNA(Gln). This chain is Glutamyl-tRNA(Gln) amidotransferase subunit A, found in Bacillus cereus (strain AH820).